The following is a 237-amino-acid chain: Phosphoribosylaminoimidazole-succinocarboxamide synthase (237 aa).

This sequence belongs to the SAICAR synthetase family.

The enzyme catalyses 5-amino-1-(5-phospho-D-ribosyl)imidazole-4-carboxylate + L-aspartate + ATP = (2S)-2-[5-amino-1-(5-phospho-beta-D-ribosyl)imidazole-4-carboxamido]succinate + ADP + phosphate + 2 H(+). Its pathway is purine metabolism; IMP biosynthesis via de novo pathway; 5-amino-1-(5-phospho-D-ribosyl)imidazole-4-carboxamide from 5-amino-1-(5-phospho-D-ribosyl)imidazole-4-carboxylate: step 1/2. This is Phosphoribosylaminoimidazole-succinocarboxamide synthase from Sodalis glossinidius (strain morsitans).